Reading from the N-terminus, the 347-residue chain is NADH-ubiquinone oxidoreductase chain 2 (347 aa).

10 helical membrane-spanning segments follow: residues 1–21, 25–45, 59–79, 96–116, 122–142, 148–168, 200–220, 240–260, 274–294, and 325–345; these read MNPL…GIVM, HWLT…PILM, YFLT…INLV, IILT…FWVP, VHLP…MSVL, MINL…GGWG, MALL…LTFM, ITTI…LSGF, NSII…FFYM, and LLSP…MLML.

This sequence belongs to the complex I subunit 2 family. Core subunit of respiratory chain NADH dehydrogenase (Complex I) which is composed of 45 different subunits. Interacts with TMEM242.

The protein resides in the mitochondrion inner membrane. It catalyses the reaction a ubiquinone + NADH + 5 H(+)(in) = a ubiquinol + NAD(+) + 4 H(+)(out). In terms of biological role, core subunit of the mitochondrial membrane respiratory chain NADH dehydrogenase (Complex I) which catalyzes electron transfer from NADH through the respiratory chain, using ubiquinone as an electron acceptor. Essential for the catalytic activity and assembly of complex I. The protein is NADH-ubiquinone oxidoreductase chain 2 of Thoopterus nigrescens (Swift fruit bat).